The primary structure comprises 423 residues: Tumor necrosis factor receptor superfamily member 19 (423 aa).

A signal peptide spans 1-29 (MALKVLLEQEKTFFTLLVLLGYLSCKVTC). The Extracellular segment spans residues 30 to 170 (ESGDCRQQEF…TASSPRDTAL (141 aa)). 3 TNFR-Cys repeats span residues 33-72 (DCRQQEFRDRSGNCVPCNQCGPGMELSKECGFGYGEDAQC), 74-114 (TCRL…DAIC), and 116-149 (DCLPGFYRKTKLVGFQDMECVPCGDPPPPYEPHC). 8 cysteine pairs are disulfide-bonded: Cys-34–Cys-46, Cys-49–Cys-62, Cys-52–Cys-72, Cys-75–Cys-89, Cys-92–Cys-106, Cys-95–Cys-114, Cys-117–Cys-135, and Cys-138–Cys-149. N-linked (GlcNAc...) asparagine glycosylation is present at Asn-105. Residues 171–191 (AAVICSALATVLLALLILCVI) traverse the membrane as a helical segment. Over 192-423 (YCKRQFMEKK…LQVRQRLGSL (232 aa)) the chain is Cytoplasmic.

As to quaternary structure, associates with TRAF1, TRAF2, TRAF3 and TRAF5. Interacts with LINGO1. Highly expressed in prostate. Detected at lower levels in thymus, spleen, testis, uterus, small intestine, colon and peripheral blood leukocytes.

The protein resides in the membrane. In terms of biological role, can mediate activation of JNK and NF-kappa-B. May promote caspase-independent cell death. This Homo sapiens (Human) protein is Tumor necrosis factor receptor superfamily member 19 (TNFRSF19).